Consider the following 379-residue polypeptide: Cytochrome b (379 aa).

Transmembrane regions (helical) follow at residues 33–53 (FGSL…FLAM), 77–98 (WLIR…FIHV), 113–133 (WNIG…GYVL), and 178–198 (FFAF…VHLL). The heme b site is built by His83 and His97. Heme b-binding residues include His182 and His196. An a ubiquinone-binding site is contributed by His201. 4 helical membrane-spanning segments follow: residues 226-246 (IKDL…ALFF), 288-308 (LGGV…PLLN), 320-340 (ITQT…WIGG), and 347-367 (FTMI…ILXP).

It belongs to the cytochrome b family. In terms of assembly, the cytochrome bc1 complex contains 11 subunits: 3 respiratory subunits (MT-CYB, CYC1 and UQCRFS1), 2 core proteins (UQCRC1 and UQCRC2) and 6 low-molecular weight proteins (UQCRH/QCR6, UQCRB/QCR7, UQCRQ/QCR8, UQCR10/QCR9, UQCR11/QCR10 and a cleavage product of UQCRFS1). This cytochrome bc1 complex then forms a dimer. The cofactor is heme b.

The protein localises to the mitochondrion inner membrane. Functionally, component of the ubiquinol-cytochrome c reductase complex (complex III or cytochrome b-c1 complex) that is part of the mitochondrial respiratory chain. The b-c1 complex mediates electron transfer from ubiquinol to cytochrome c. Contributes to the generation of a proton gradient across the mitochondrial membrane that is then used for ATP synthesis. The sequence is that of Cytochrome b (MT-CYB) from Akodon toba (Chaco grass mouse).